A 125-amino-acid polypeptide reads, in one-letter code: Large ribosomal subunit protein bL20 (125 aa).

It belongs to the bacterial ribosomal protein bL20 family.

Binds directly to 23S ribosomal RNA and is necessary for the in vitro assembly process of the 50S ribosomal subunit. It is not involved in the protein synthesizing functions of that subunit. In Rhodospirillum rubrum (strain ATCC 11170 / ATH 1.1.1 / DSM 467 / LMG 4362 / NCIMB 8255 / S1), this protein is Large ribosomal subunit protein bL20.